The sequence spans 364 residues: Lipoyl synthase, mitochondrial (364 aa).

[4Fe-4S] cluster contacts are provided by C99, C104, C110, C130, C134, C137, and S345. Residues 116-334 (HSTQTATIML…EQRGNELGFL (219 aa)) enclose the Radical SAM core domain.

This sequence belongs to the radical SAM superfamily. Lipoyl synthase family. Requires [4Fe-4S] cluster as cofactor.

Its subcellular location is the mitochondrion. The catalysed reaction is [[Fe-S] cluster scaffold protein carrying a second [4Fe-4S](2+) cluster] + N(6)-octanoyl-L-lysyl-[protein] + 2 oxidized [2Fe-2S]-[ferredoxin] + 2 S-adenosyl-L-methionine + 4 H(+) = [[Fe-S] cluster scaffold protein] + N(6)-[(R)-dihydrolipoyl]-L-lysyl-[protein] + 4 Fe(3+) + 2 hydrogen sulfide + 2 5'-deoxyadenosine + 2 L-methionine + 2 reduced [2Fe-2S]-[ferredoxin]. It functions in the pathway protein modification; protein lipoylation via endogenous pathway; protein N(6)-(lipoyl)lysine from octanoyl-[acyl-carrier-protein]: step 2/2. In terms of biological role, catalyzes the radical-mediated insertion of two sulfur atoms into the C-6 and C-8 positions of the octanoyl moiety bound to the lipoyl domains of lipoate-dependent enzymes, thereby converting the octanoylated domains into lipoylated derivatives. The protein is Lipoyl synthase, mitochondrial of Drosophila mojavensis (Fruit fly).